Here is a 746-residue protein sequence, read N- to C-terminus: SNF-related serine/threonine-protein kinase (746 aa).

A Protein kinase domain is found at tyrosine 16 to leucine 269. ATP is bound by residues leucine 22–valine 30 and lysine 45. Residue aspartate 139 is the Proton acceptor of the active site. Serine 162 is modified (phosphoserine). At threonine 173 the chain carries Phosphothreonine; by LKB1. In terms of domain architecture, UBA spans serine 291–glutamate 334. Phosphoserine occurs at positions 362, 390, 482, 495, and 518. The tract at residues serine 383–aspartate 414 is disordered. Residues glutamate 494 to glutamate 503 show a composition bias toward acidic residues. The disordered stretch occupies residues glutamate 494–alanine 638. The span at valine 522–glutamine 532 shows a compositional bias: basic residues. The span at glycine 533–glutamate 542 shows a compositional bias: low complexity. Arginine 534 bears the Omega-N-methylarginine mark. Over residues glutamate 549–serine 558 the composition is skewed to basic and acidic residues. 2 stretches are compositionally biased toward gly residues: residues glycine 575–valine 592 and glutamine 600–proline 614. Residues serine 615–alanine 638 are compositionally biased toward low complexity.

The protein belongs to the protein kinase superfamily. CAMK Ser/Thr protein kinase family. Mg(2+) is required as a cofactor. Autophosphorylated. Phosphorylation on Thr-173 by STK11/LKB1 in complex with STE20-related adapter-alpha (STRADA) pseudo kinase and CAB39. Ubiquitously expressed in all tissues examined with highest levels in the brain and testis. Strongly expressed in the pyramidal and granule neurons of the hippocampus and also in the cerebellum.

The protein resides in the nucleus. It catalyses the reaction L-seryl-[protein] + ATP = O-phospho-L-seryl-[protein] + ADP + H(+). It carries out the reaction L-threonyl-[protein] + ATP = O-phospho-L-threonyl-[protein] + ADP + H(+). Activated by phosphorylation on Thr-173. In terms of biological role, may play a role in hematopoietic cell proliferation or differentiation. Potential mediator of neuronal apoptosis. The sequence is that of SNF-related serine/threonine-protein kinase from Rattus norvegicus (Rat).